The primary structure comprises 287 residues: Putative sugar uptake protein M6_Spy1874 (287 aa).

The next 10 membrane-spanning stretches (helical) occupy residues 4–26, 33–50, 55–72, 85–107, 117–134, 154–171, 181–200, 207–229, 234–256, and 268–285; these read IFYA…KIGG, LGMT…WLIV, TLQL…WSIG, VSVA…GVLV, FVVG…FYFS, FRAL…AVLF, SVIL…FMSF, YVIK…LLAA, LAIA…ILFL, and VVTG…LGVV.

The protein belongs to the GRP transporter (TC 2.A.7.5) family.

Its subcellular location is the cell membrane. The protein is Putative sugar uptake protein M6_Spy1874 of Streptococcus pyogenes serotype M6 (strain ATCC BAA-946 / MGAS10394).